Consider the following 100-residue polypeptide: Ubiquitin-related modifier 1 homolog (100 aa).

Gly-100 is modified (1-thioglycine). Residue Gly-100 forms a Glycyl lysine isopeptide (Gly-Lys) (interchain with K-? in acceptor proteins) linkage.

This sequence belongs to the URM1 family. In terms of assembly, interacts with cer. C-terminal thiocarboxylation occurs in 2 steps, it is first acyl-adenylated (-COAMP) via the hesA/moeB/thiF part of the MOCS3 homolog, then thiocarboxylated (-COSH) via the rhodanese domain of the MOCS3 homolog.

Its subcellular location is the cytoplasm. The protein operates within tRNA modification; 5-methoxycarbonylmethyl-2-thiouridine-tRNA biosynthesis. In terms of biological role, acts as a sulfur carrier required for 2-thiolation of mcm(5)S(2)U at tRNA wobble positions of cytosolic tRNA(Lys), tRNA(Glu) and tRNA(Gln). Serves as sulfur donor in tRNA 2-thiolation reaction by being thiocarboxylated (-COSH) at its C-terminus by MOCS3. The sulfur is then transferred to tRNA to form 2-thiolation of mcm(5)S(2)U. Also acts as a ubiquitin-like protein (UBL) that is covalently conjugated via an isopeptide bond to lysine residues of target proteins such as Prx2/Jafrac1, Ciao1, Eip71CD and GILT1. The thiocarboxylated form serves as substrate for conjugation and oxidative stress specifically induces the formation of UBL-protein conjugates. The chain is Ubiquitin-related modifier 1 homolog from Drosophila willistoni (Fruit fly).